A 206-amino-acid polypeptide reads, in one-letter code: MNFQQRLQSLWTLARPFCPPLLATASQMQMVVLPCLGFTLLLWSQVSGAQGQEFHFGPCQVKGVVPQKLWEAFWAVKDTMQAQDNITSARLLQQEVLQNVSDAESCYLVHTLLEFYLKTVFKNYHNRTVEVRTLKSFSTLANNFVLIVSQLQPSQENEMFSIRDSAHRRFLLFRRAFKQLDVEAALTKALGEVDILLTWMQKFYKL.

A signal peptide spans 1–51 (MNFQQRLQSLWTLARPFCPPLLATASQMQMVVLPCLGFTLLLWSQVSGAQG). An intrachain disulfide couples cysteine 59 to cysteine 106. N-linked (GlcNAc...) asparagine glycans are attached at residues asparagine 85 and asparagine 99. Lysine 122 is covalently cross-linked (Glycyl lysine isopeptide (Lys-Gly) (interchain with G-Cter in ubiquitin)). Residue asparagine 126 is glycosylated (N-linked (GlcNAc...) asparagine).

It belongs to the IL-10 family. Glycosylated. In terms of processing, ubiquitination at Lys-122 promotes proteasomal degradation. Up-regulated in melanoma cells induced to terminally differentiate.

It localises to the secreted. Its function is as follows. Multifunctional cytokine mainly produced by T-cells that plays a regulatory role in immune response, tissue homeostasis, host defense, and oncogenesis. Possesses antiviral functions and induces the type I interferon response during influenza infection. Signals through two receptor complexes IL20RA/IL20RB or IL20RB/IL22RA1. In turn, stimulates the JAK1-STAT3 and MAPK pathways and promotes the secretion of pro-inflammatory mediators including IL8 and MMP1. Intracellularly, maintains endoplasmic reticulum homeostasis by restricting the eIF2alpha-CHOP pathway-mediated stress signal. In addition, acts as a quality control mechanism for the ubiquitin proteasome system by alerting the cell to proteasome dysfunction through activation of PKR/EIF2AK2. This chain is Interleukin-24 (IL24), found in Homo sapiens (Human).